Consider the following 226-residue polypeptide: 2,3-bisphosphoglycerate-dependent phosphoglycerate mutase (226 aa).

Substrate-binding positions include 8-15, 21-22, R58, 109-112, K120, 136-137, and 180-181; these read RHGQSVWN, TG, ERMY, RR, and GN. H9 functions as the Tele-phosphohistidine intermediate in the catalytic mechanism. E109 serves as the catalytic Proton donor/acceptor.

This sequence belongs to the phosphoglycerate mutase family. BPG-dependent PGAM subfamily.

The catalysed reaction is (2R)-2-phosphoglycerate = (2R)-3-phosphoglycerate. It functions in the pathway carbohydrate degradation; glycolysis; pyruvate from D-glyceraldehyde 3-phosphate: step 3/5. Its function is as follows. Catalyzes the interconversion of 2-phosphoglycerate and 3-phosphoglycerate. In Chlamydia trachomatis serovar L2b (strain UCH-1/proctitis), this protein is 2,3-bisphosphoglycerate-dependent phosphoglycerate mutase.